Consider the following 1819-residue polypeptide: MDSTSRRVVFFSNEFPNDDLKELFRRLDQHSKDRRFRLLSIFLEESTAVLKDEVSKLPRPLKELVPPFDSVLGLVDVDFRQGPLGAAMESSMLTILELGLFIGYVSLLCLLDQVKMLTSLVYTSHYESEDTEWDLVPGESVLAGLSIGILAAAAVALSSSLADVAKTGAEAVRVSFRLGVYVADISTKLETPQSDGTLSSWAHVVTEMTEAGVQDELRQFNTDTHSPELTKVFISAADKTSVSVSGPPSRIKAAFQHSPVLRYSKSLPLPVYDGLCHASHLYTQSDIDSIINSAESVIVADRSVRLALLSSQTGKPFIAKTASELFLEIGTELLTGTIYLDNVTAGIVQHLQPQSKEISSWQIDSFRTSLVLRGIHSAVEAKLSGEQRQLIRRDLVNWVNKDFGPRQPRSHASSKLAIVGMACRLPGGANDLDLFWKLLEEGRDTLTTVPPDRFDLNTHYDPTGKTENATQTPYGNFIDRPGFFDAGFFNMSPREAEQTDPMQRLALVTAYEALEMAGVVPGRTPSTHPSRIGTFYGQASDDWRELNASQNISTYAVPGGERAFGNGRINYFFKFSGPSFNLDTACSSGLAAVQAACSALWAGEVDTAIAGGLNVITDPDNYCGLGNAHFLSKTGQCKVWDKDADGYCRADGIGSVVIKRLEDAEADNDNILAVVLGASTNHSAEAISITHPHAGAQKANYRQVLNQAGVNPIDVSYIELHGTGTQAGDAVESESVSDIFAPVTPRRRPDQRLYLGAVKSNIGHGEAAAGIASLLKALLVYQKNLIPMHIGIKSVINPTIPKDLERRNVGLAMQNTPWPRPAGKKRLAVVNSFGAHGGNTTLLLEDAPERVKIQGTEDRITHSILLSAKSKKSLQANMESLLSYLDQHPETSLADLAYTTSSRRMHHNMRFGTSVSCISGLQKVLRSQLDNVNFASEVRPVPNEAPSVILAFTSQGAYYHGMGRELFAEFPYFRAQVQQLDRLAQRLGFPSVVPVIENSIEDTPSSPILTQLSVVILEIALARFWSLLGVSISAVIGHSLGEYAALAVAGVISATDAIYLVGRRAQLVEERCAQGSHSMLSVRAPEDEIQKMLAAEPETASIAYEVSCCNTNQDTVIGGLTGEINDIRRTLEAKSIKCTILDVPYAFHTAQVNPILDDLETLAKAVPFKAPSIPVISPLLATVIYDVKSLNANYLRRATRETVDFAAAIEAAQDMGLVDSKTIWIDVGPHPICAGLVRSMIPSAPAMSSCRRNEDSIATISKSLVTLYLAGINPCWAEFFKPREREYSLLHLPKYRWNEIDYWIPYLGTWTLDKAHLKHGTKPTTPFSVSMSRPSALRTSLVHQITAETVEATTATLHTISDMQHPDFLEAIHGHTMNKCGVATSSIWSDMAFTVGEYLYRRLVPNTKDVHMNLTDVEVLHAQVASKTKGSVQPLVLRAHLDLSTSSMSLSWFNANGETGECAAESFATAMIRFEDPMAWRKEWARLAHLVRGRIEVLEQRASEGKASRLSKPLAYALFKNVVDYADRYRGMDSVVLDELEAMAEVTLVPERYGTWHTPPHWIDSVSHLAGLVMNGSDASNTRDYFFVTPGCDSFRLLKKLEPGAQYRSYVRMFPLPEDPNMHGGDVYILQGEEIVGMVGMIRIRRVPRLLMDRFFSPPTTTSVAGPVPPLSGETTKYHDIAQTAPALPAPTLPIVVPNPVASSTMASKAPEPAPLLATSSESSTPKESPIVTPAESEREDPVDNNMISQCLRLMARETGLEVEALTADASFVQLGVDSLMSLVLSEKFRAELGVEIKSSLFLECPTIGEMTAWIEEYC.

The tract at residues 25-277 is N-terminal acylcarrier protein transacylase domain (SAT); the sequence is RRLDQHSKDR…PLPVYDGLCH (253 aa). In terms of domain architecture, Ketosynthase family 3 (KS3) spans 413 to 846; sequence SSKLAIVGMA…GGNTTLLLED (434 aa). Catalysis depends on for beta-ketoacyl synthase activity residues Cys-586, His-721, and His-764. The interval 952–1249 is malonyl-CoA:ACP transacylase (MAT) domain; that stretch reads FTSQGAYYHG…MIPSAPAMSS (298 aa). Positions 1339-1658 are product template (PT) domain; sequence TSLVHQITAE…RLLMDRFFSP (320 aa). Residues 1343 to 1479 form an N-terminal hotdog fold region; the sequence is HQITAETVEA…AMIRFEDPMA (137 aa). The PKS/mFAS DH domain occupies 1343–1653; sequence HQITAETVEA…IRRVPRLLMD (311 aa). Residue His-1375 is the Proton acceptor; for dehydratase activity of the active site. The segment at 1507 to 1653 is C-terminal hotdog fold; that stretch reads ASRLSKPLAY…IRRVPRLLMD (147 aa). Asp-1564 functions as the Proton donor; for dehydratase activity in the catalytic mechanism. A disordered region spans residues 1703–1742; the sequence is SSTMASKAPEPAPLLATSSESSTPKESPIVTPAESEREDP. The span at 1719 to 1730 shows a compositional bias: low complexity; it reads TSSESSTPKESP. The Carrier domain occupies 1742–1819; it reads PVDNNMISQC…EMTAWIEEYC (78 aa). Ser-1779 bears the O-(pantetheine 4'-phosphoryl)serine mark.

Requires pantetheine 4'-phosphate as cofactor.

It functions in the pathway secondary metabolite biosynthesis. In terms of biological role, non-reducing polyketide synthase; part of the gene cluster that mediates the biosynthesis of neosartoricin B, a prenylated anthracenone that probably exhibits T-cell antiproliferative activity, suggestive of a physiological role as an immunosuppressive agent. The non-reducing polyketide synthase nscA probably synthesizes and cyclizes the decaketide backbone. The hydrolase nscB then mediates the product release through hydrolysis followed by spontaneous decarboxylation. The prenyltransferase nscD catalyzes the addition of the dimethylallyl group to the aromatic C5. The FAD-dependent monooxygenase nscC is then responsible for the stereospecific hydroxylation at C2. Neosartoricin B can be converted into two additional compounds neosartoricins C and D. Neosartoricin C is a spirocyclic compound that is cyclized through the attack of C3 hydroxyl on C14, followed by dehydration. On the other hand, neosartoricin D is a further cyclized compound in which attack of C2 on C14 in neosartoricin C results in the formation of the acetal-containing dioxabicyclo-octanone ring. Both of these compounds are novel and possibly represent related metabolites of the gene cluster. This is Non-reducing polyketide synthase nscA from Trichophyton verrucosum (strain HKI 0517).